We begin with the raw amino-acid sequence, 279 residues long: Osmoprotective compounds uptake permease protein GgtC (279 aa).

The next 7 helical transmembrane spans lie at 7-27 (LLFL…LSFF), 58-78 (LWLV…AVLV), 90-110 (IIFL…KFVY), 120-140 (IGLL…WLVE), 146-166 (FALI…ILSA), 202-222 (LLVV…IVFV), and 247-267 (FGRG…VMIT). The ABC transmembrane type-1 domain occupies 53 to 270 (FRNNLLWLVL…IVPVMITNIR (218 aa)).

The protein belongs to the binding-protein-dependent transport system permease family. As to quaternary structure, the complex is composed of two ATP-binding proteins (GgtA), two transmembrane proteins (GgtC and GgtD) and a solute-binding protein (GgtB).

The protein resides in the cell membrane. In terms of biological role, part of the ABC transporter complex GgtABCD involved in the uptake of the osmoprotective compounds glucosylglycerol (GG), sucrose and trehalose. Responsible for the translocation of the substrate across the membrane. The sequence is that of Osmoprotective compounds uptake permease protein GgtC from Synechocystis sp. (strain ATCC 27184 / PCC 6803 / Kazusa).